We begin with the raw amino-acid sequence, 133 residues long: Small ribosomal subunit protein uS8 (133 aa).

The protein belongs to the universal ribosomal protein uS8 family. Part of the 30S ribosomal subunit. Contacts proteins S5 and S12.

Its function is as follows. One of the primary rRNA binding proteins, it binds directly to 16S rRNA central domain where it helps coordinate assembly of the platform of the 30S subunit. This is Small ribosomal subunit protein uS8 from Chlamydia trachomatis serovar A (strain ATCC VR-571B / DSM 19440 / HAR-13).